Reading from the N-terminus, the 397-residue chain is MEMNKVLHQDLVQATRRILKLGPSELRVTDAGLICKNPNYSVCDAMLKTDTVYCVEYLLSYWESRTDHVPCFIFKNTGCAVSLCCFVRAPVKLVSPARHVGEFNVLKVNESLIVTLKDIEEIKPSAYGVLTKCVVRKSNSASVFNIELIAFGPENEGEYENLLRELYAKKAASTSLAVRNHVTVSSHSGSGPSLWRARMSAALTRTAGKRSSRTASPPPPPRHPSCSPTMVAAGGAAAGPRPPPPPMAAGSWRLCRCEACMGRCGCASEGDADEEEEELLALAGEGKAAAAAAGQDVGGSARRPLEEHVSRRRGVSTHHRHPPSPPCAPSLERTGYRWAPSSWWRARSGPSRPQSGPWLPARFATLGPLVLALLLVLALLWRGHGQSSSPTRSAHRD.

Residues 1-358 (MEMNKVLHQD…GPSRPQSGPW (358 aa)) lie on the Perinuclear space side of the membrane. Disordered stretches follow at residues 205 to 245 (RTAG…PPPP) and 291 to 332 (AAAG…PSLE). S216 carries the post-translational modification Phosphoserine. 2 stretches are compositionally biased toward low complexity: residues 224–239 (PSCS…AAAG) and 291–301 (AAAGQDVGGSA). Residues 310–322 (SRRRGVSTHHRHP) show a composition bias toward basic residues. Residues 359 to 381 (LPARFATLGPLVLALLLVLALLW) form a helical membrane-spanning segment. At 382 to 397 (RGHGQSSSPTRSAHRD) the chain is on the nuclear side.

It belongs to the herpesviridae NEC2 protein family. Forms a heterohexameric complex with NEC1. Interacts with host UBA7 and RNF170; this interaction promotes UBA7 proteasomal degradation. In terms of processing, phosphorylated. Phosphorylation by viral kinase UL97 at Ser-216 plays an important role for correct viral nuclear egress complex (NEC) localization.

It localises to the host nucleus inner membrane. Functionally, plays an essential role in virion nuclear egress, the first step of virion release from infected cell. Within the host nucleus, NEC1 interacts with the newly formed capsid through the vertexes and directs it to the inner nuclear membrane by associating with NEC2. Induces the budding of the capsid at the inner nuclear membrane as well as its envelopment into the perinuclear space. There, the NEC1/NEC2 complex promotes the fusion of the enveloped capsid with the outer nuclear membrane and the subsequent release of the viral capsid into the cytoplasm where it will reach the secondary budding sites in the host Golgi or trans-Golgi network. Inhibits host ISGylation and subsequent innate antiviral response by targeting host UBA7 for proteasomal degradation. The chain is Nuclear egress protein 2 from Human cytomegalovirus (strain AD169) (HHV-5).